Consider the following 382-residue polypeptide: Mannitol-1-phosphate 5-dehydrogenase (382 aa).

3-14 (ALHFGAGNIGRG) provides a ligand contact to NAD(+).

Belongs to the mannitol dehydrogenase family.

It catalyses the reaction D-mannitol 1-phosphate + NAD(+) = beta-D-fructose 6-phosphate + NADH + H(+). In Klebsiella pneumoniae (strain 342), this protein is Mannitol-1-phosphate 5-dehydrogenase.